The primary structure comprises 328 residues: Small ribosomal subunit protein bS1A (328 aa).

3 S1 motif domains span residues 31–100 (GDIV…LSIR), 118–182 (DATV…LSHR), and 196–264 (AQVV…LSTK). Residues 298 to 328 (EAQGIPYEPPTSVDDTDDEEDESLAVSAVDE) are disordered. Acidic residues predominate over residues 311–328 (DDTDDEEDESLAVSAVDE).

This sequence belongs to the bacterial ribosomal protein bS1 family.

In terms of biological role, binds mRNA. The sequence is that of Small ribosomal subunit protein bS1A (rps1A) from Synechocystis sp. (strain ATCC 27184 / PCC 6803 / Kazusa).